The sequence spans 20 residues: Putative phosphoglycerate kinase (20 aa).

Belongs to the phosphoglycerate kinase family. Monomer.

It localises to the cytoplasm. It catalyses the reaction (2R)-3-phosphoglycerate + ATP = (2R)-3-phospho-glyceroyl phosphate + ADP. The protein operates within carbohydrate degradation; glycolysis; pyruvate from D-glyceraldehyde 3-phosphate: step 2/5. The chain is Putative phosphoglycerate kinase (pgk) from Clostridium pasteurianum.